The primary structure comprises 485 residues: MFTLRSLAILAVFAATALASKQSSNDRELVVAIYGGGLASATLAQALKGSSNLNVQYFDPALDLTPTSFRLFGFDPKVHDALALVNEEAGGAIERSGWYPEEPSVVVVGQGSDADTVVLDWAQLKNTTHHPQVTVVDPKPFLQQMLNGTDESRLHPNKTLVSITRKDLSAKYPLELKFQDGSIQHADVLIGDDGPFGQMRSEVLGAKHPANAPVFMNFLSAVAHVAPDDAEKLLGQKYGNRDLGRRFERVGMGSWFLNAYLEGFSTCLGSFYTEEAYDLSQFTRTTSVKELTARFSNLNEADNSQKILSGYSGLRLIPEIEHSPAPTYINGLVAMQGNAAHFMTNFQQLGPSQQIEDAMILGTLLRSAHSRADVEAALYAYDTVRRPRSQWVSEHGKRLGWLWTGMVEDVGIDAKKLKKAMLQWKQDSEAFDLKAHKNEAVKIMKQTIKERSGSEKIITQEEKIKAGFQGLWEAMREKSGEQVEL.

The first 19 residues, 1-19, serve as a signal peptide directing secretion; it reads MFTLRSLAILAVFAATALA. Residues Asp59 and Gly73 each coordinate FAD. 3 N-linked (GlcNAc...) asparagine glycosylation sites follow: Asn126, Asn147, and Asn157.

Belongs to the paxM FAD-dependent monooxygenase family. FAD is required as a cofactor.

The protein operates within secondary metabolite biosynthesis. Functionally, FAD-dependent monooxygenase; part of the gene cluster that mediates the biosynthesis of elsinochrome C, a perelyenequinone phytotoxin structurally similar to cercosporin. The first step of elsinochrome C biosynthesis is performed by the polyketide synthase elcA which catalyzes the formation of nor-toralactone. The starter unit acyltransferase (SAT) domain of elcA initiates polyketide extension by the selective utilization of acetyl-CoA, which is elongated to the heptaketide in the beta-ketoacyl synthase (KS) domain by successive condensations with six malonyl units introduced by the malonyl acyltransferase (MAT) domain. The product template (PT) domain catalyzes C4-C9 and C2-C11 aldol cyclizations and dehydrations to a trihydroxynaphthalene, which is thought to be delivered to the thioesterase (TE) domain for product release. The bifunctional enzyme elcB then methylates nor-toralactone to toralactone before conducting an unusual oxidative aromatic ring opening. The next step in perylenequinone biosynthesis is an O-methylation at the nascent OH-6 of the elcB product performed by the O-methyltransferase elcD. The oxidative coupling of the two monomeric naphthol units in perylenequinone biosynthesis is catalyzed by the FAD-dependent monooxygenase elcE and the multicopper oxidase elcG. ElcG might catalyze the first intermolecular coupling in a regio- and stereo-selective manner via a phenol radical coupling mechanism and the elcE could forge the second C-C bond intramolecularly via a hydride transfer mechanism. The fasciclin domain-containing protein elcF might also play a role duting this step. The last piece of the puzzle in the biosynthesis of elsinochrome C is the additional annulation by enolate coupling to afford the dihydrobenzo(ghi)perylenequinone system, catalyzed by the FAD-dependent monooxygenase elcH. In Phaeosphaeria nodorum (strain SN15 / ATCC MYA-4574 / FGSC 10173) (Glume blotch fungus), this protein is FAD-dependent monooxygenase elcH.